The primary structure comprises 180 residues: Guanosine-3',5'-bis(diphosphate) 3'-pyrophosphohydrolase MESH1 (180 aa).

The region spanning 33–128 (YINHPIGVAR…VKLADKLYNL (96 aa)) is the HD domain. The Mn(2+) site is built by H36, H62, and D63. Active-site nucleophile residues include E66 and D67. D123 is a Mn(2+) binding site.

It belongs to the MESH1 family. Mn(2+) is required as a cofactor.

It catalyses the reaction guanosine 3',5'-bis(diphosphate) + H2O = GDP + diphosphate + H(+). In terms of biological role, ppGpp hydrolyzing enzyme involved in starvation response. The protein is Guanosine-3',5'-bis(diphosphate) 3'-pyrophosphohydrolase MESH1 (hddc3) of Danio rerio (Zebrafish).